The following is a 330-amino-acid chain: 5'-AMP-activated protein kinase subunit gamma-1 (330 aa).

Positions 1-13 are enriched in polar residues; sequence METVTSSDSSSAV. The segment at 1–26 is disordered; the sequence is METVTSSDSSSAVENEHPQDTPESNN. CBS domains lie at 43-103, 125-187, and 198-260; these read PTSS…KSAL, SFKP…PKPE, and IGTY…NLDV. ADP-binding positions include Arg-70, 85-90, Val-130, 151-152, and Lys-170; these read MLTITD and HR. AMP-binding positions include Arg-70, 85 to 90, Val-130, His-151, 151 to 152, Lys-170, Thr-200, Ala-205, 226 to 227, and 242 to 245; these read MLTITD, HR, SA, and SKFD. Residues Arg-70, 85–90, Val-130, 151–152, Arg-152, and Lys-170 contribute to the ATP site; these read MLTITD and HR. An AMPK pseudosubstrate motif is present at residues 138–159; sequence LFDAVSSLIRNKIHRLPVIDPE. Position 242–245 (242–245) interacts with ADP; that stretch reads SKFD. 242-245 contributes to the ATP binding site; that stretch reads SKFD. Residue Ser-261 is modified to Phosphoserine; by ULK1. Thr-263 bears the Phosphothreonine; by ULK1 mark. Arg-269 contributes to the ADP binding site. Arg-269 contributes to the AMP binding site. Arg-269 is a binding site for ATP. Ser-270 bears the Phosphoserine; by ULK1 mark. The region spanning 272–329 is the CBS 4 domain; it reads YFEGVLKCYLHETLETIINRLVEAEVHRLVVVDENDVVKGIVSLSDILQALVLTGGEK. ADP-binding positions include Leu-277 and 298–299; that span reads HR. Residues Leu-277, His-298, 298 to 299, and 314 to 317 each bind AMP; these read HR and SLSD. Residues Leu-277 and 298 to 299 each bind ATP; that span reads HR.

This sequence belongs to the 5'-AMP-activated protein kinase gamma subunit family. AMPK is a heterotrimer of an alpha catalytic subunit (PRKAA1 or PRKAA2), a beta (PRKAB1 or PRKAB2) and a gamma non-catalytic subunits (PRKAG1, PRKAG2 or PRKAG3). Interacts with FNIP1 and FNIP2. In terms of processing, phosphorylated by ULK1 and ULK2; leading to negatively regulate AMPK activity and suggesting the existence of a regulatory feedback loop between ULK1, ULK2 and AMPK. Glycosylated; O-GlcNAcylated by OGT, promoting the AMP-activated protein kinase (AMPK) activity.

In terms of biological role, AMP/ATP-binding subunit of AMP-activated protein kinase (AMPK), an energy sensor protein kinase that plays a key role in regulating cellular energy metabolism. In response to reduction of intracellular ATP levels, AMPK activates energy-producing pathways and inhibits energy-consuming processes: inhibits protein, carbohydrate and lipid biosynthesis, as well as cell growth and proliferation. AMPK acts via direct phosphorylation of metabolic enzymes, and by longer-term effects via phosphorylation of transcription regulators. Also acts as a regulator of cellular polarity by remodeling the actin cytoskeleton; probably by indirectly activating myosin. Gamma non-catalytic subunit mediates binding to AMP, ADP and ATP, leading to activate or inhibit AMPK: AMP-binding results in allosteric activation of alpha catalytic subunit (PRKAA1 or PRKAA2) both by inducing phosphorylation and preventing dephosphorylation of catalytic subunits. ADP also stimulates phosphorylation, without stimulating already phosphorylated catalytic subunit. ATP promotes dephosphorylation of catalytic subunit, rendering the AMPK enzyme inactive. The polypeptide is 5'-AMP-activated protein kinase subunit gamma-1 (PRKAG1) (Sus scrofa (Pig)).